A 660-amino-acid chain; its full sequence is DNA mismatch repair protein MutL (660 aa).

This sequence belongs to the DNA mismatch repair MutL/HexB family.

Functionally, this protein is involved in the repair of mismatches in DNA. It is required for dam-dependent methyl-directed DNA mismatch repair. May act as a 'molecular matchmaker', a protein that promotes the formation of a stable complex between two or more DNA-binding proteins in an ATP-dependent manner without itself being part of a final effector complex. The sequence is that of DNA mismatch repair protein MutL from Streptococcus pyogenes serotype M1.